The primary structure comprises 213 residues: Octanoyltransferase (213 aa).

The region spanning 35–213 (DERGDAVLLL…ERHLPTLIEP (179 aa)) is the BPL/LPL catalytic domain. Residues 73-80 (RGGKITWH), 145-147 (AIG), and 158-160 (GFS) each bind substrate. Cys-176 (acyl-thioester intermediate) is an active-site residue.

The protein belongs to the LipB family.

It is found in the cytoplasm. The catalysed reaction is octanoyl-[ACP] + L-lysyl-[protein] = N(6)-octanoyl-L-lysyl-[protein] + holo-[ACP] + H(+). The protein operates within protein modification; protein lipoylation via endogenous pathway; protein N(6)-(lipoyl)lysine from octanoyl-[acyl-carrier-protein]: step 1/2. Catalyzes the transfer of endogenously produced octanoic acid from octanoyl-acyl-carrier-protein onto the lipoyl domains of lipoate-dependent enzymes. Lipoyl-ACP can also act as a substrate although octanoyl-ACP is likely to be the physiological substrate. This is Octanoyltransferase from Salinispora tropica (strain ATCC BAA-916 / DSM 44818 / JCM 13857 / NBRC 105044 / CNB-440).